A 485-amino-acid chain; its full sequence is NADH-quinone oxidoreductase subunit N (485 aa).

The next 14 membrane-spanning stretches (helical) occupy residues 8–28 (LIAL…MLSI), 35–55 (FLNA…LWFV), 71–91 (GFAM…CTFA), 105–125 (FYLL…ANHL), 127–147 (ALFL…GYAF), 159–179 (YTIL…LVYA), 203–223 (LLAG…LVPF), 235–255 (PAPV…GVVM), 271–291 (VVLG…ALSQ), 297–317 (LLGY…IALQ), 326–346 (VGVY…VVSL), 373–393 (AAVM…LGFI), 408–430 (WWLV…RVAV), and 455–475 (IVVL…QPLI).

The protein belongs to the complex I subunit 2 family. As to quaternary structure, NDH-1 is composed of 13 different subunits. Subunits NuoA, H, J, K, L, M, N constitute the membrane sector of the complex.

It is found in the cell inner membrane. The catalysed reaction is a quinone + NADH + 5 H(+)(in) = a quinol + NAD(+) + 4 H(+)(out). Its function is as follows. NDH-1 shuttles electrons from NADH, via FMN and iron-sulfur (Fe-S) centers, to quinones in the respiratory chain. The immediate electron acceptor for the enzyme in this species is believed to be ubiquinone. Couples the redox reaction to proton translocation (for every two electrons transferred, four hydrogen ions are translocated across the cytoplasmic membrane), and thus conserves the redox energy in a proton gradient. In Salmonella schwarzengrund (strain CVM19633), this protein is NADH-quinone oxidoreductase subunit N.